Reading from the N-terminus, the 494-residue chain is Neuronal acetylcholine receptor subunit alpha-6 (494 aa).

The first 25 residues, 1-25 (MLTSKGQGFLHGGLCLWLCVFTPFF), serve as a signal peptide directing secretion. Topologically, residues 26-239 (KGCVGCATEE…ITYSFYIRRL (214 aa)) are extracellular. 2 N-linked (GlcNAc...) asparagine glycosylation sites follow: Asn-54 and Asn-171. Disulfide bonds link Cys-158–Cys-172 and Cys-222–Cys-223. Helical transmembrane passes span 240-264 (PMFY…VFYL), 272-290 (VTLC…LVIT), and 306-327 (YLLF…VLNI). Over 328 to 465 (HYRTPTTHTM…WKYVAMVVDR (138 aa)) the chain is Cytoplasmic. Ser-401 carries the post-translational modification Phosphoserine. Residues 466–484 (VFLWVFIIVCVFGTAGLFL) traverse the membrane as a helical segment.

This sequence belongs to the ligand-gated ion channel (TC 1.A.9) family. Acetylcholine receptor (TC 1.A.9.1) subfamily. Alpha-6/CHRNA6 sub-subfamily. As to quaternary structure, neuronal AChR is composed of two different types of subunits: alpha and non-alpha (beta). CHRNA6/alpha-6 subunit can be combined to CHRNB2/beta-2, CHRNA4/alpha-4 and CHRNB3/beta-3 to give rise to functional receptors. Heteropentamers containing CHRNB3 have an stoichiometry of (CHRNA6:CHRNB2)2:CHRNB3. Interacts with LYPD6.

It localises to the synaptic cell membrane. It carries out the reaction Ca(2+)(in) = Ca(2+)(out). The enzyme catalyses K(+)(in) = K(+)(out). It catalyses the reaction Na(+)(in) = Na(+)(out). With respect to regulation, activated by a myriad of ligands such as acetylcholine, cytisine and nicotine. CHRNA6 nAChR activity is inhibited by the antagonists alpha-conotoxin MII and PIA, a small disulfide-constrained peptides from cone snails. In terms of biological role, component of neuronal acetylcholine receptors (nAChRs) that function as pentameric, ligand-gated cation channels with high calcium permeability among other activities. nAChRs are excitatory neurotrasnmitter receptors formed by a collection of nAChR subunits known to mediate synaptic transmission in the nervous system and the neuromuscular junction. Each nAchR subunit confers differential attributes to channel properties, including activation, deactivation and desensitization kinetics, pH sensitivity, cation permeability, and binding to allosteric modulators. CHRNA6 forms pentameric channels with CHRNB2, CHRNB3 and CHRNA4 that exhibit high sensitivity to ACh and nicotine and are predominantly expressed in only a few brain areas, including dopaminergic neurons, norepirephrine neurons and cells of the visual system. nAChrs containing CHRNA6 subunits mediate endogenous cholinergic modulation of dopamine and gamma-aminobutyric acid (GABA) release in response to nicotine at nerve terminals. The chain is Neuronal acetylcholine receptor subunit alpha-6 (CHRNA6) from Pan troglodytes (Chimpanzee).